Consider the following 239-residue polypeptide: 1-(5-phosphoribosyl)-5-[(5-phosphoribosylamino)methylideneamino] imidazole-4-carboxamide isomerase (239 aa).

Catalysis depends on aspartate 7, which acts as the Proton acceptor. Aspartate 129 functions as the Proton donor in the catalytic mechanism.

Belongs to the HisA/HisF family.

It is found in the cytoplasm. It carries out the reaction 1-(5-phospho-beta-D-ribosyl)-5-[(5-phospho-beta-D-ribosylamino)methylideneamino]imidazole-4-carboxamide = 5-[(5-phospho-1-deoxy-D-ribulos-1-ylimino)methylamino]-1-(5-phospho-beta-D-ribosyl)imidazole-4-carboxamide. The protein operates within amino-acid biosynthesis; L-histidine biosynthesis; L-histidine from 5-phospho-alpha-D-ribose 1-diphosphate: step 4/9. This chain is 1-(5-phosphoribosyl)-5-[(5-phosphoribosylamino)methylideneamino] imidazole-4-carboxamide isomerase, found in Lactiplantibacillus plantarum (strain ATCC BAA-793 / NCIMB 8826 / WCFS1) (Lactobacillus plantarum).